Consider the following 440-residue polypeptide: P47(GAG-CRK) protein (440 aa).

The tract at residues 1–208 (MEAVIKVISS…TPRGAEQPRA (208 aa)) is gag first part. A PPXY motif motif is present at residues 174 to 177 (PPPY). The segment at 183–230 (YPSLAGVGEQQGQGGDTPRGAEQPRAGRGAGHRGLRRPAGRGQRVRPA) is disordered. Positions 209–437 (GRGAGHRGLR…PSSASVSTLT (229 aa)) are CRK. Residues 212–221 (AGHRGLRRPA) show a composition bias toward basic residues. The 107-residue stretch at 248-354 (WYWGRLSRGD…LDTTTLIEPV (107 aa)) folds into the SH2 domain. In terms of domain architecture, SH3 spans 368-428 (EEVEYVRALF…PVPYVEKCRP (61 aa)). A gag second part region spans residues 438 to 440 (GGR).

In Avian sarcoma virus CT10 (Avian sarcoma virus (strain CT10)), this protein is P47(GAG-CRK) protein.